The chain runs to 336 residues: Ankyrin repeat and SOCS box protein 1 (336 aa).

6 ANK repeats span residues 37–69 (CDDT…RINE), 78–107 (LPCT…EVDL), 111–140 (KGQT…DPNG), 144–173 (HRST…DVDV), 192–221 (LVVC…NPDF), and 236–266 (SPGC…NLNL). Residues 287-336 (LQVFKEARSIPRTLLSLCRVAVRRALGKYRLHLVPSLPLPDPIKKFLLYE) enclose the SOCS box domain.

Belongs to the ankyrin SOCS box (ASB) family. As to quaternary structure, interacts with CUL5 and RNF7. Highest expression in testis, spleen, bone marrow and salivary gland.

Its pathway is protein modification; protein ubiquitination. Probable substrate-recognition component of a SCF-like ECS (Elongin-Cullin-SOCS-box protein) E3 ligase complex which mediates the ubiquitination and subsequent proteasomal degradation of target proteins. Mediates Notch-induced ubiquitination and degradation of TCF3/E2A and JAK2. May play a role in testis development. The chain is Ankyrin repeat and SOCS box protein 1 (Asb1) from Mus musculus (Mouse).